Reading from the N-terminus, the 308-residue chain is Ribonuclease Z (308 aa).

His-63, His-65, Asp-67, His-68, His-140, Asp-211, and His-269 together coordinate Zn(2+). Asp-67 serves as the catalytic Proton acceptor.

Belongs to the RNase Z family. Homodimer. Zn(2+) serves as cofactor.

It catalyses the reaction Endonucleolytic cleavage of RNA, removing extra 3' nucleotides from tRNA precursor, generating 3' termini of tRNAs. A 3'-hydroxy group is left at the tRNA terminus and a 5'-phosphoryl group is left at the trailer molecule.. In terms of biological role, zinc phosphodiesterase, which displays some tRNA 3'-processing endonuclease activity. Probably involved in tRNA maturation, by removing a 3'-trailer from precursor tRNA. The chain is Ribonuclease Z from Bacillus velezensis (strain DSM 23117 / BGSC 10A6 / LMG 26770 / FZB42) (Bacillus amyloliquefaciens subsp. plantarum).